A 156-amino-acid polypeptide reads, in one-letter code: MGLSLLWALLQDMALAAVPALGFAMVFNVPLKVLPYCALLGGVGHGVRFLAMHFGMNIEWASFLAAILIGIIGIRWSRWLLAHPKVFTVAAVIPMFPGISAYTAMISVVEISHLGYSEALMSVMITNFLKASFIVGALSIGLSLPGIWLYRKRPGV.

The next 4 helical transmembrane spans lie at tryptophan 7–phenylalanine 27, phenylalanine 54–isoleucine 74, valine 86–isoleucine 106, and phenylalanine 128–tryptophan 148.

Belongs to the ThrE exporter (TC 2.A.79) family. The transporter is composed of YjjB and YjjP.

It is found in the cell inner membrane. Involved in succinate export with YjjP. Both proteins are required for export. The polypeptide is Probable succinate transporter subunit YjjB (Pectobacterium carotovorum subsp. carotovorum (strain PC1)).